The following is a 638-amino-acid chain: Pentatricopeptide repeat-containing protein At3g49730 (638 aa).

12 PPR repeats span residues 130-164 (SYEV…NPEL), 166-200 (EPEL…GLEP), 201-231 (DEYV…MREK), 235-269 (NLRY…GLEP), 270-304 (DIVV…GFEP), 305-340 (NVNC…GCEA), 341-375 (DIVT…GVMP), 376-410 (SQVT…GCHP), 411-445 (DLLI…GLSP), 446-480 (GVDT…GIFS), 483-513 (QYGT…ISNK), and 520-554 (NVSA…DLMP). The disordered stretch occupies residues 604–638 (LIEKAKPKGNKEGKKKGTDHQRYKGRGERSRAKAL).

This sequence belongs to the PPR family. P subfamily.

This is Pentatricopeptide repeat-containing protein At3g49730 from Arabidopsis thaliana (Mouse-ear cress).